Reading from the N-terminus, the 879-residue chain is Alanine--tRNA ligase (879 aa).

4 residues coordinate Zn(2+): His-566, His-570, Cys-668, and His-672.

It belongs to the class-II aminoacyl-tRNA synthetase family. The cofactor is Zn(2+).

It is found in the cytoplasm. The enzyme catalyses tRNA(Ala) + L-alanine + ATP = L-alanyl-tRNA(Ala) + AMP + diphosphate. Catalyzes the attachment of alanine to tRNA(Ala) in a two-step reaction: alanine is first activated by ATP to form Ala-AMP and then transferred to the acceptor end of tRNA(Ala). Also edits incorrectly charged Ser-tRNA(Ala) and Gly-tRNA(Ala) via its editing domain. This chain is Alanine--tRNA ligase, found in Halalkalibacterium halodurans (strain ATCC BAA-125 / DSM 18197 / FERM 7344 / JCM 9153 / C-125) (Bacillus halodurans).